The sequence spans 1371 residues: DNA-directed RNA polymerase subunit beta' (1371 aa).

Zn(2+) contacts are provided by Cys-71, Cys-73, Cys-86, and Cys-89. Mg(2+) is bound by residues Asp-461, Asp-463, and Asp-465. Cys-803, Cys-877, Cys-884, and Cys-887 together coordinate Zn(2+).

Belongs to the RNA polymerase beta' chain family. In terms of assembly, the RNAP catalytic core consists of 2 alpha, 1 beta, 1 beta' and 1 omega subunit. When a sigma factor is associated with the core the holoenzyme is formed, which can initiate transcription. It depends on Mg(2+) as a cofactor. Requires Zn(2+) as cofactor.

The catalysed reaction is RNA(n) + a ribonucleoside 5'-triphosphate = RNA(n+1) + diphosphate. In terms of biological role, DNA-dependent RNA polymerase catalyzes the transcription of DNA into RNA using the four ribonucleoside triphosphates as substrates. This is DNA-directed RNA polymerase subunit beta' from Thermodesulfovibrio yellowstonii (strain ATCC 51303 / DSM 11347 / YP87).